Consider the following 310-residue polypeptide: MNLQDDQTSADLFQVATFYSFTAWPEVTITCLLQDLLSLGDEHQLMGTVLLAEEGVNGTICGSVDGVSALLERLERDLIEGLFELKISWTPEQAFRRFKVRRKAEIVTMGLAGLNPSKTVGTYVDAHEWNDLIDDPDTLLIDTRNDYEIAIGEFKGAINPQTKCFRDFPAWVEQQLRSMVKAKTSARIAMYCTGGIRCEKATSYLIEKGFTNVHHLRGGILRYFEEVSQSESRWQGECFVFDQRVALNHQLSPGVYRLCHACGMPLTPEDQAMNSYRTGVQCRHCVDQFSDTDRIRFAERQRQMEHSSRK.

Positions 134–232 (DDPDTLLIDT…YFEEVSQSES (99 aa)) constitute a Rhodanese domain. Residue Cys192 is the Cysteine persulfide intermediate of the active site.

The protein belongs to the TrhO family.

The catalysed reaction is uridine(34) in tRNA + AH2 + O2 = 5-hydroxyuridine(34) in tRNA + A + H2O. Functionally, catalyzes oxygen-dependent 5-hydroxyuridine (ho5U) modification at position 34 in tRNAs. This is tRNA uridine(34) hydroxylase from Prochlorococcus marinus (strain MIT 9303).